The primary structure comprises 436 residues: Enolase (436 aa).

Position 167 (glutamine 167) interacts with (2R)-2-phosphoglycerate. Catalysis depends on glutamate 209, which acts as the Proton donor. Positions 246, 291, and 318 each coordinate Mg(2+). Positions 343, 372, 373, and 394 each coordinate (2R)-2-phosphoglycerate. Lysine 343 (proton acceptor) is an active-site residue.

Belongs to the enolase family. In terms of assembly, component of the RNA degradosome, a multiprotein complex involved in RNA processing and mRNA degradation. The cofactor is Mg(2+).

It is found in the cytoplasm. Its subcellular location is the secreted. The protein resides in the cell surface. The catalysed reaction is (2R)-2-phosphoglycerate = phosphoenolpyruvate + H2O. It participates in carbohydrate degradation; glycolysis; pyruvate from D-glyceraldehyde 3-phosphate: step 4/5. In terms of biological role, catalyzes the reversible conversion of 2-phosphoglycerate (2-PG) into phosphoenolpyruvate (PEP). It is essential for the degradation of carbohydrates via glycolysis. The sequence is that of Enolase from Actinobacillus pleuropneumoniae serotype 3 (strain JL03).